We begin with the raw amino-acid sequence, 66 residues long: Defensin-like peptide 2/4 (66 aa).

The first 22 residues, 1-22, serve as a signal peptide directing secretion; it reads MRLAYLLLLLVAVLFQAGGGSA. A propeptide spanning residues 23-24 is cleaved from the precursor; the sequence is KP. Residue methionine 26 is modified to D-methionine; in form DLP-2. Cystine bridges form between cysteine 33–cysteine 63, cysteine 40–cysteine 56, and cysteine 48–cysteine 64.

Stereoinversion of L-Met-26 (in DLP-4) to D-Met-26 (in DLP-2). Produced by the crural gland and detected in venom from the spur located on each male hind leg. Is also widely expressed in both male and female tissues, including brain, intestine, kidney, lung, spleen and testis.

It is found in the secreted. Its function is as follows. Does not show antimicrobial, myotoxic, hemolytic and cell-promoting activities. This is Defensin-like peptide 2/4 from Ornithorhynchus anatinus (Duckbill platypus).